A 173-amino-acid polypeptide reads, in one-letter code: Development-specific protein S (173 aa).

2 Beta/gamma crystallin 'Greek key' domains span residues alanine 2–proline 46 and valine 48–serine 86. The Ca(2+) site is built by tyrosine 8, asparagine 37, threonine 38, serine 40, glutamine 54, asparagine 77, asparagine 78, and serine 80. The segment at valine 87–glutamine 90 is connecting peptide. Beta/gamma crystallin 'Greek key' domains lie at proline 91–glycine 135 and leucine 136–serine 173.

The protein belongs to the beta/gamma-crystallin family.

In terms of biological role, protein S, induced in large amounts during fruiting body formation, assembles on the surface of myxospores in the presence of calcium ions. This is Development-specific protein S (tps) from Myxococcus xanthus.